Consider the following 450-residue polypeptide: Sulfite exporter TauE/SafE family protein 1 (450 aa).

12 helical membrane passes run 5 to 25 (LVPLLLSLITIFTIFNPSALA), 48 to 68 (TIEVSIPTIIAAVLSFFAASI), 70 to 90 (SAGGIGGGGLFLSIMTIIAGL), 97 to 117 (SFSAFMVTGVSFANVGCNLFL), 130 to 150 (FDLALTIQPCLLLGVSIGVIC), 153 to 173 (MFPNWLVLFLFAVFLAWSTMK), 223 to 243 (FPWMKLGVLVIIWLLFFSINL), 261 to 281 (ALYWFLSSLQIPLTIFFTLCI), 316 to 336 (VMALLAGVLGGLFGIGGGMLI), 340 to 360 (LLQIGIAPEVTAATCSFMVLF), 378 to 398 (GTAAIFALVCFVASLVGLMVV), and 408 to 428 (ASIIVFAVGIVMALSTVLMTT).

It belongs to the 4-toluene sulfonate uptake permease (TSUP) (TC 2.A.102) family.

The protein localises to the membrane. The polypeptide is Sulfite exporter TauE/SafE family protein 1 (Arabidopsis thaliana (Mouse-ear cress)).